The chain runs to 318 residues: Methionyl-tRNA formyltransferase (318 aa).

112–115 contacts (6S)-5,6,7,8-tetrahydrofolate; sequence SILP.

This sequence belongs to the Fmt family.

The catalysed reaction is L-methionyl-tRNA(fMet) + (6R)-10-formyltetrahydrofolate = N-formyl-L-methionyl-tRNA(fMet) + (6S)-5,6,7,8-tetrahydrofolate + H(+). Functionally, attaches a formyl group to the free amino group of methionyl-tRNA(fMet). The formyl group appears to play a dual role in the initiator identity of N-formylmethionyl-tRNA by promoting its recognition by IF2 and preventing the misappropriation of this tRNA by the elongation apparatus. This is Methionyl-tRNA formyltransferase from Shewanella sp. (strain MR-7).